The chain runs to 312 residues: Olfactory receptor 2J1 (312 aa).

Over 1–26 (MLMKKNASFEDFFLLLGFSNWPHLEV) the chain is Extracellular. A glycan (N-linked (GlcNAc...) asparagine) is linked at Asn6. A helical transmembrane segment spans residues 27-50 (VLFVVILIFYLITLIGNLFIIILS). At 51–58 (YLDSHLHT) the chain is on the cytoplasmic side. The chain crosses the membrane as a helical span at residues 59 to 80 (PMYFFLSNLSFLDLCYTTSSIP). The Extracellular segment spans residues 81–101 (QLLVNLWGPEKTISYAGCTVQ). A disulfide bridge connects residues Cys98 and Cys190. Residues 102–121 (LYFVLALGTAECVLLVVMSY) traverse the membrane as a helical segment. Topologically, residues 122 to 140 (DRYAAVCRPLHYTVLMHPR) are cytoplasmic. A helical transmembrane segment spans residues 141-159 (FCRLLAAASWVSGFTTSAL). The Extracellular segment spans residues 160-196 (HSSFTFWIPLCRHRLVDHFFCEVPALLRLSCVDTQAN). The helical transmembrane segment at 197 to 220 (ELTLMVMSSIFVLIPLILILTSYG) threads the bilayer. Over 221 to 237 (AIARAVLSMQSTTGLQK) the chain is Cytoplasmic. A helical membrane pass occupies residues 238–260 (VLRTCGAHLMVVSLFFIPVMCMY). Residues 261-273 (LQPPSENSQDQGK) are Extracellular-facing. The chain crosses the membrane as a helical span at residues 274 to 293 (FIALFYTVVTPSLNPLIYTF). The Cytoplasmic portion of the chain corresponds to 294 to 312 (RNKDVRGAVKRLMGWEWGM).

This sequence belongs to the G-protein coupled receptor 1 family.

It is found in the cell membrane. Its function is as follows. Odorant receptor. This Homo sapiens (Human) protein is Olfactory receptor 2J1 (OR2J1).